The following is a 586-amino-acid chain: Arginine--tRNA ligase (586 aa).

Residues 131-141 (ANPTGPLHVGH) carry the 'HIGH' region motif.

This sequence belongs to the class-I aminoacyl-tRNA synthetase family. As to quaternary structure, monomer.

It is found in the cytoplasm. The catalysed reaction is tRNA(Arg) + L-arginine + ATP = L-arginyl-tRNA(Arg) + AMP + diphosphate. The protein is Arginine--tRNA ligase of Nitrosomonas europaea (strain ATCC 19718 / CIP 103999 / KCTC 2705 / NBRC 14298).